The chain runs to 452 residues: Bifunctional protein GlmU (452 aa).

The segment at 1–226 (MKNIHAIILA…KFEIAGVNDK (226 aa)) is pyrophosphorylase. UDP-N-acetyl-alpha-D-glucosamine-binding positions include 9–12 (LAAG), Lys23, Gln73, 78–79 (GT), 100–102 (YGD), Gly137, Glu151, Asn166, and Asn224. Residue Asp102 coordinates Mg(2+). Asn224 provides a ligand contact to Mg(2+). Residues 227–247 (VQLAELERIFQINQATQFMQQ) are linker. The interval 248 to 452 (GLSLKDPNRF…LKNWQRPTKK (205 aa)) is N-acetyltransferase. UDP-N-acetyl-alpha-D-glucosamine contacts are provided by Arg330 and Lys348. Catalysis depends on His360, which acts as the Proton acceptor. UDP-N-acetyl-alpha-D-glucosamine-binding residues include Tyr363 and Asn374. Acetyl-CoA-binding positions include Ala377, 383–384 (NY), Ser402, Ala420, and Arg437.

The protein in the N-terminal section; belongs to the N-acetylglucosamine-1-phosphate uridyltransferase family. This sequence in the C-terminal section; belongs to the transferase hexapeptide repeat family. As to quaternary structure, homotrimer. It depends on Mg(2+) as a cofactor.

It localises to the cytoplasm. The catalysed reaction is alpha-D-glucosamine 1-phosphate + acetyl-CoA = N-acetyl-alpha-D-glucosamine 1-phosphate + CoA + H(+). It carries out the reaction N-acetyl-alpha-D-glucosamine 1-phosphate + UTP + H(+) = UDP-N-acetyl-alpha-D-glucosamine + diphosphate. Its pathway is nucleotide-sugar biosynthesis; UDP-N-acetyl-alpha-D-glucosamine biosynthesis; N-acetyl-alpha-D-glucosamine 1-phosphate from alpha-D-glucosamine 6-phosphate (route II): step 2/2. It participates in nucleotide-sugar biosynthesis; UDP-N-acetyl-alpha-D-glucosamine biosynthesis; UDP-N-acetyl-alpha-D-glucosamine from N-acetyl-alpha-D-glucosamine 1-phosphate: step 1/1. It functions in the pathway bacterial outer membrane biogenesis; LPS lipid A biosynthesis. Functionally, catalyzes the last two sequential reactions in the de novo biosynthetic pathway for UDP-N-acetylglucosamine (UDP-GlcNAc). The C-terminal domain catalyzes the transfer of acetyl group from acetyl coenzyme A to glucosamine-1-phosphate (GlcN-1-P) to produce N-acetylglucosamine-1-phosphate (GlcNAc-1-P), which is converted into UDP-GlcNAc by the transfer of uridine 5-monophosphate (from uridine 5-triphosphate), a reaction catalyzed by the N-terminal domain. The protein is Bifunctional protein GlmU of Ruthia magnifica subsp. Calyptogena magnifica.